The primary structure comprises 218 residues: Protein-L-isoaspartate O-methyltransferase (218 aa).

Ser52 is a catalytic residue.

It belongs to the methyltransferase superfamily. L-isoaspartyl/D-aspartyl protein methyltransferase family.

It is found in the cytoplasm. The catalysed reaction is [protein]-L-isoaspartate + S-adenosyl-L-methionine = [protein]-L-isoaspartate alpha-methyl ester + S-adenosyl-L-homocysteine. Functionally, catalyzes the methyl esterification of L-isoaspartyl residues in peptides and proteins that result from spontaneous decomposition of normal L-aspartyl and L-asparaginyl residues. It plays a role in the repair and/or degradation of damaged proteins. This Rhodopseudomonas palustris (strain ATCC BAA-98 / CGA009) protein is Protein-L-isoaspartate O-methyltransferase.